Consider the following 492-residue polypeptide: Membrane-bound glycerophospholipid O-acyltransferase 1 (492 aa).

The next 6 helical transmembrane spans lie at Val33–Leu53, Ile69–Leu89, Ile125–Thr145, Pro179–Cys199, Met237–Leu257, and Tyr296–Met316. Residues Asn349 and His380 contribute to the active site. 3 helical membrane-spanning segments follow: residues Val370–Phe390, Val423–Leu443, and Tyr452–Ile472. The residue at position 486 (Ser486) is a Phosphoserine.

The protein belongs to the membrane-bound acyltransferase family. In terms of tissue distribution, highly expressed in stomach, epididymis, and colon.

It is found in the endoplasmic reticulum membrane. It carries out the reaction a 1-acyl-sn-glycero-3-phosphoethanolamine + an acyl-CoA = a 1,2-diacyl-sn-glycero-3-phosphoethanolamine + CoA. It catalyses the reaction a 1-acyl-sn-glycero-3-phospho-L-serine + an acyl-CoA = a 1,2-diacyl-sn-glycero-3-phospho-L-serine + CoA. The enzyme catalyses a 1-acyl-sn-glycero-3-phosphocholine + an acyl-CoA = a 1,2-diacyl-sn-glycero-3-phosphocholine + CoA. The catalysed reaction is a 1-O-(1Z-alkenyl)-sn-glycero-3-phosphoethanolamine + (9Z)-octadecenoyl-CoA = 1-O-(1Z)-alkenyl-2-(9Z)-octadecenoyl-sn-glycero-3-phosphoethanolamine + CoA. It carries out the reaction 1-octadecanoyl-sn-glycero-3-phosphoethanolamine + (9Z)-octadecenoyl-CoA = 1-octadecanoyl-2-(9Z-octadecenoyl)-sn-glycero-3-phosphoethanolamine + CoA. It catalyses the reaction 1-(9Z-octadecenoyl)-sn-glycero-3-phospho-L-serine + (9Z)-octadecenoyl-CoA = 1,2-di-(9Z)-octadecenoyl-sn-glycero-3-phospho-L-serine + CoA. The enzyme catalyses 1-(9Z-octadecenoyl)-sn-glycero-3-phosphoethanolamine + (9Z)-octadecenoyl-CoA = 1,2-di-(9Z-octadecenoyl)-sn-glycero-3-phosphoethanolamine + CoA. The catalysed reaction is 1-hexadecanoyl-sn-glycero-3-phosphoethanolamine + (9Z)-octadecenoyl-CoA = 1-hexadecanoyl-2-(9Z-octadecenoyl)-sn-glycero-3-phosphoethanolamine + CoA. It carries out the reaction 1-(10Z-heptadecenoyl)-sn-glycero-3-phosphoethanolamine + hexadecanoyl-CoA = 1-(10Z-heptadecenoyl)-2-hexadecanoyl-sn-glycero-3-phosphoethanolamine + CoA. It catalyses the reaction 1-(9Z-octadecenoyl)-sn-glycero-3-phospho-L-serine + octadecanoyl-CoA = 1-(9Z-octadecenoyl)-2-octadecanoyl-sn-glycero-3-phospho-L-serine + CoA. The enzyme catalyses 1-(9Z-octadecenoyl)-sn-glycero-3-phospho-L-serine + (9Z)-hexadecenoyl-CoA = 1-(9Z-octadecenoyl)-2-(9Z-hexadecenoyl)-sn-glycero-3-phospho-L-serine + CoA. The catalysed reaction is 1-(9Z-octadecenoyl)-sn-glycero-3-phospho-L-serine + (9Z,12Z)-octadecadienoyl-CoA = 1-(9Z-octadecenoyl)-2-(9Z,12Z-octadienoyl)-sn-glycero-3-phospho-L-serine + CoA. It carries out the reaction 1-hexadecanoyl-sn-glycero-3-phosphocholine + (9Z)-octadecenoyl-CoA = 1-hexadecanoyl-2-(9Z-octadecenoyl)-sn-glycero-3-phosphocholine + CoA. It catalyses the reaction 1-(10Z-heptadecenoyl)-sn-glycero-3-phosphoethanolamine + (9Z)-octadecenoyl-CoA = 1-(10Z-heptadecenoyl)-2-(9Z-octadecenoyl)-sn-glycero-3-phosphoethanolamine + CoA. It participates in lipid metabolism; phospholipid metabolism. Acyltransferase which catalyzes the transfer of an acyl group from an acyl-CoA towards a lysophospholipid producing a phospholipid and participates in the reacylation step of the phospholipid remodeling pathway also known as the Lands cycle. Acts on lysophosphatidylserine (1-acyl-2-hydroxy-sn-glycero-3-phospho-L-serine or LPS) and lysophosphatidylethanolamine (1-acyl-sn-glycero-3-phosphoethanolamine or LPE), and to a lesser extend lysophosphatidylcholine. Prefers oleoyl-CoA as the acyl donor and 1-oleoyl-LPE as acceptor. May play a role in neurite outgrowth during neuronal differentiation. This is Membrane-bound glycerophospholipid O-acyltransferase 1 from Mus musculus (Mouse).